The sequence spans 95 residues: Aspartyl/glutamyl-tRNA(Asn/Gln) amidotransferase subunit C (95 aa).

Belongs to the GatC family. As to quaternary structure, heterotrimer of A, B and C subunits.

It carries out the reaction L-glutamyl-tRNA(Gln) + L-glutamine + ATP + H2O = L-glutaminyl-tRNA(Gln) + L-glutamate + ADP + phosphate + H(+). It catalyses the reaction L-aspartyl-tRNA(Asn) + L-glutamine + ATP + H2O = L-asparaginyl-tRNA(Asn) + L-glutamate + ADP + phosphate + 2 H(+). In terms of biological role, allows the formation of correctly charged Asn-tRNA(Asn) or Gln-tRNA(Gln) through the transamidation of misacylated Asp-tRNA(Asn) or Glu-tRNA(Gln) in organisms which lack either or both of asparaginyl-tRNA or glutaminyl-tRNA synthetases. The reaction takes place in the presence of glutamine and ATP through an activated phospho-Asp-tRNA(Asn) or phospho-Glu-tRNA(Gln). This chain is Aspartyl/glutamyl-tRNA(Asn/Gln) amidotransferase subunit C, found in Caulobacter sp. (strain K31).